Reading from the N-terminus, the 246-residue chain is Ribonuclease PH (246 aa).

Phosphate is bound by residues R91 and 129-131 (GTR).

Belongs to the RNase PH family. In terms of assembly, homohexameric ring arranged as a trimer of dimers.

The catalysed reaction is tRNA(n+1) + phosphate = tRNA(n) + a ribonucleoside 5'-diphosphate. Phosphorolytic 3'-5' exoribonuclease that plays an important role in tRNA 3'-end maturation. Removes nucleotide residues following the 3'-CCA terminus of tRNAs; can also add nucleotides to the ends of RNA molecules by using nucleoside diphosphates as substrates, but this may not be physiologically important. Probably plays a role in initiation of 16S rRNA degradation (leading to ribosome degradation) during starvation. The sequence is that of Ribonuclease PH from Paraburkholderia phytofirmans (strain DSM 17436 / LMG 22146 / PsJN) (Burkholderia phytofirmans).